The following is a 437-amino-acid chain: Nicotinate phosphoribosyltransferase (437 aa).

H231 carries the phosphohistidine; by autocatalysis modification.

It belongs to the NAPRTase family. Post-translationally, transiently phosphorylated on a His residue during the reaction cycle. Phosphorylation strongly increases the affinity for substrates and increases the rate of nicotinate D-ribonucleotide production. Dephosphorylation regenerates the low-affinity form of the enzyme, leading to product release.

The enzyme catalyses nicotinate + 5-phospho-alpha-D-ribose 1-diphosphate + ATP + H2O = nicotinate beta-D-ribonucleotide + ADP + phosphate + diphosphate. The protein operates within cofactor biosynthesis; NAD(+) biosynthesis; nicotinate D-ribonucleotide from nicotinate: step 1/1. Catalyzes the synthesis of beta-nicotinate D-ribonucleotide from nicotinate and 5-phospho-D-ribose 1-phosphate at the expense of ATP. This chain is Nicotinate phosphoribosyltransferase, found in Vibrio vulnificus (strain CMCP6).